A 220-amino-acid polypeptide reads, in one-letter code: tRNA (guanine-N(7)-)-methyltransferase (220 aa).

Residues E44, E69, D96, and D118 each coordinate S-adenosyl-L-methionine. Residue D118 is part of the active site. Residue K122 participates in substrate binding. Residues R124 to R129 are interaction with RNA. Substrate is bound by residues D154 and T191–E194.

It belongs to the class I-like SAM-binding methyltransferase superfamily. TrmB family.

It catalyses the reaction guanosine(46) in tRNA + S-adenosyl-L-methionine = N(7)-methylguanosine(46) in tRNA + S-adenosyl-L-homocysteine. Its pathway is tRNA modification; N(7)-methylguanine-tRNA biosynthesis. Functionally, catalyzes the formation of N(7)-methylguanine at position 46 (m7G46) in tRNA. In Halalkalibacterium halodurans (strain ATCC BAA-125 / DSM 18197 / FERM 7344 / JCM 9153 / C-125) (Bacillus halodurans), this protein is tRNA (guanine-N(7)-)-methyltransferase.